Reading from the N-terminus, the 361-residue chain is Epoxyqueuosine reductase (361 aa).

The active-site Proton donor is the Asp-147. Residues 193–222 (VDPAMDSEHCGRCSACLDICPTAAFVGPYR) enclose the 4Fe-4S ferredoxin-type domain. Cys-202, Cys-205, Cys-208, Cys-212, Cys-228, Cys-255, Cys-258, and Cys-262 together coordinate [4Fe-4S] cluster.

It belongs to the QueG family. Monomer. The cofactor is cob(II)alamin. [4Fe-4S] cluster serves as cofactor.

Its subcellular location is the cytoplasm. It carries out the reaction epoxyqueuosine(34) in tRNA + AH2 = queuosine(34) in tRNA + A + H2O. It participates in tRNA modification; tRNA-queuosine biosynthesis. Functionally, catalyzes the conversion of epoxyqueuosine (oQ) to queuosine (Q), which is a hypermodified base found in the wobble positions of tRNA(Asp), tRNA(Asn), tRNA(His) and tRNA(Tyr). This Pseudomonas aeruginosa (strain ATCC 15692 / DSM 22644 / CIP 104116 / JCM 14847 / LMG 12228 / 1C / PRS 101 / PAO1) protein is Epoxyqueuosine reductase.